We begin with the raw amino-acid sequence, 513 residues long: 2,3-bisphosphoglycerate-independent phosphoglycerate mutase (513 aa).

Asp15 and Ser65 together coordinate Mn(2+). Ser65 serves as the catalytic Phosphoserine intermediate. Substrate contacts are provided by residues His126, 156-157, Arg188, Arg194, 263-266, and Lys337; these read RD and RADR. Residues Asp402, His406, Asp443, His444, and His461 each contribute to the Mn(2+) site.

Belongs to the BPG-independent phosphoglycerate mutase family. As to quaternary structure, monomer. Mn(2+) is required as a cofactor.

The catalysed reaction is (2R)-2-phosphoglycerate = (2R)-3-phosphoglycerate. It participates in carbohydrate degradation; glycolysis; pyruvate from D-glyceraldehyde 3-phosphate: step 3/5. Catalyzes the interconversion of 2-phosphoglycerate and 3-phosphoglycerate. In Moorella thermoacetica (strain ATCC 39073 / JCM 9320), this protein is 2,3-bisphosphoglycerate-independent phosphoglycerate mutase.